The sequence spans 138 residues: Large ribosomal subunit protein bL19 (138 aa).

The protein belongs to the bacterial ribosomal protein bL19 family.

In terms of biological role, this protein is located at the 30S-50S ribosomal subunit interface and may play a role in the structure and function of the aminoacyl-tRNA binding site. This is Large ribosomal subunit protein bL19 from Rickettsia africae (strain ESF-5).